Here is a 438-residue protein sequence, read N- to C-terminus: uncharacterized protein (438 aa).

Residue His59 coordinates Zn(2+). Catalysis depends on Glu62, which acts as the Proton acceptor. Residues His63 and Glu139 each coordinate Zn(2+).

This sequence belongs to the peptidase M16 family. Zn(2+) is required as a cofactor.

This is an uncharacterized protein from Mycobacterium tuberculosis (strain CDC 1551 / Oshkosh).